Consider the following 392-residue polypeptide: Putative pectate lyase 21 (392 aa).

A signal peptide spans 1–21; that stretch reads MSIVCTFFLFLLNTSFAFAFA. The N-linked (GlcNAc...) asparagine glycan is linked to asparagine 38. Positions 189, 213, and 217 each coordinate Ca(2+). Asparagine 220 carries N-linked (GlcNAc...) asparagine glycosylation. Residue arginine 269 is part of the active site.

The protein belongs to the polysaccharide lyase 1 family. The cofactor is Ca(2+).

It catalyses the reaction Eliminative cleavage of (1-&gt;4)-alpha-D-galacturonan to give oligosaccharides with 4-deoxy-alpha-D-galact-4-enuronosyl groups at their non-reducing ends.. Its pathway is glycan metabolism; pectin degradation; 2-dehydro-3-deoxy-D-gluconate from pectin: step 2/5. This chain is Putative pectate lyase 21, found in Arabidopsis thaliana (Mouse-ear cress).